The chain runs to 74 residues: DNA-directed RNA polymerase subunit omega (74 aa).

Belongs to the RNA polymerase subunit omega family. In terms of assembly, the RNAP catalytic core consists of 2 alpha, 1 beta, 1 beta' and 1 omega subunit. When a sigma factor is associated with the core the holoenzyme is formed, which can initiate transcription.

The catalysed reaction is RNA(n) + a ribonucleoside 5'-triphosphate = RNA(n+1) + diphosphate. In terms of biological role, promotes RNA polymerase assembly. Latches the N- and C-terminal regions of the beta' subunit thereby facilitating its interaction with the beta and alpha subunits. This chain is DNA-directed RNA polymerase subunit omega, found in Campylobacter jejuni subsp. jejuni serotype O:6 (strain 81116 / NCTC 11828).